Consider the following 127-residue polypeptide: Cliotide T3 (127 aa).

The signal sequence occupies residues 1-24; sequence MAYVRLTSLAVLFFLAASVMKTEG. The segment at residues 25–53 is a cross-link (cyclopeptide (Gly-Asn)); it reads GLPTCGETCTLGTCYVPDCSCSWPICMKN. 3 disulfides stabilise this stretch: C29–C43, C33–C45, and C38–C50. A propeptide spans 54–127 (removed in mature form); the sequence is HIIAANAKTV…DLKMPLESTN (74 aa).

Contains 3 disulfide bonds. In terms of processing, this is a cyclic peptide. In terms of tissue distribution, expressed in flower, stem, shoot, leaf and seed but not in root, pod and nodule (at protein level).

Functionally, probably participates in a plant defense mechanism. Not active against Gram-negative bacteria E.coli ATCC 700926, K.pneumoniae ATTC 13883 and P.aeruginosa ATCC 39018 at concentration up to 100 uM. Has cytotoxic and hemolytic activity. This is Cliotide T3 from Clitoria ternatea (Butterfly pea).